The sequence spans 338 residues: 1-aminocyclopropane-1-carboxylate deaminase (338 aa).

Lysine 51 is subject to N6-(pyridoxal phosphate)lysine. Serine 78 serves as the catalytic Nucleophile.

The protein belongs to the ACC deaminase/D-cysteine desulfhydrase family. Homotrimer. The cofactor is pyridoxal 5'-phosphate.

It carries out the reaction 1-aminocyclopropane-1-carboxylate + H2O = 2-oxobutanoate + NH4(+). Catalyzes a cyclopropane ring-opening reaction, the irreversible conversion of 1-aminocyclopropane-1-carboxylate (ACC) to ammonia and alpha-ketobutyrate. Allows growth on ACC as a nitrogen source. In Acidovorax ebreus (strain TPSY) (Diaphorobacter sp. (strain TPSY)), this protein is 1-aminocyclopropane-1-carboxylate deaminase.